The sequence spans 215 residues: Adenylate kinase (215 aa).

Gly10–Thr15 is a binding site for ATP. The segment at Ser30–Leu58 is NMP. AMP is bound by residues Thr31, Arg36, Gly56 to Leu58, Gly84 to Arg87, and Gln91. Residues His128 to Asp158 form an LID region. ATP-binding positions include Arg129 and Ile138–Tyr139. The AMP site is built by Arg155 and Arg166. An ATP-binding site is contributed by Gly194.

It belongs to the adenylate kinase family. As to quaternary structure, monomer.

It localises to the cytoplasm. It carries out the reaction AMP + ATP = 2 ADP. It functions in the pathway purine metabolism; AMP biosynthesis via salvage pathway; AMP from ADP: step 1/1. In terms of biological role, catalyzes the reversible transfer of the terminal phosphate group between ATP and AMP. Plays an important role in cellular energy homeostasis and in adenine nucleotide metabolism. The polypeptide is Adenylate kinase (Sorangium cellulosum (strain So ce56) (Polyangium cellulosum (strain So ce56))).